Reading from the N-terminus, the 234-residue chain is Phosphoribosylaminoimidazole-succinocarboxamide synthase (234 aa).

It belongs to the SAICAR synthetase family.

The enzyme catalyses 5-amino-1-(5-phospho-D-ribosyl)imidazole-4-carboxylate + L-aspartate + ATP = (2S)-2-[5-amino-1-(5-phospho-beta-D-ribosyl)imidazole-4-carboxamido]succinate + ADP + phosphate + 2 H(+). The protein operates within purine metabolism; IMP biosynthesis via de novo pathway; 5-amino-1-(5-phospho-D-ribosyl)imidazole-4-carboxamide from 5-amino-1-(5-phospho-D-ribosyl)imidazole-4-carboxylate: step 1/2. This is Phosphoribosylaminoimidazole-succinocarboxamide synthase from Pyrobaculum aerophilum (strain ATCC 51768 / DSM 7523 / JCM 9630 / CIP 104966 / NBRC 100827 / IM2).